The primary structure comprises 265 residues: Seminal vesicle secretory protein 3A (265 aa).

A signal peptide spans 1–20 (MKSIFFSLSLLLLLEKKAAG). A run of 5 repeats spans residues 116 to 119 (QIKS), 122 to 125 (QVKS), 129 to 132 (QLKS), 136 to 139 (QLKT), and 142 to 145 (QVKS). Positions 116–145 (QIKSQTQVKSYAAQLKSQPGQLKTIGQVKS) are 5 X 4 AA tandem repeats of Q-X-K-[ST].

In terms of processing, glycosylated. Post-translationally, covalently cross-linked by transglutaminase, which is important for the formation of the gelatinous copulatory plug. Five repeats of Q-X-K-(S/T) in the central region of the protein serve as the transglutaminase substrate site(s). In terms of tissue distribution, highly expressed in the seminal vesicle where it is detected in luminal epithelium of the mucosa folds, and also in luminal fluid (at protein level). Not detected in other tissues tested.

Its subcellular location is the secreted. Its function is as follows. Component of the copulatory plug. In Mus musculus (Mouse), this protein is Seminal vesicle secretory protein 3A.